The sequence spans 714 residues: Putative glutamine--fructose-6-phosphate aminotransferase [isomerizing] (714 aa).

The active-site Nucleophile; for GATase activity is Cys-2. Residues 2–321 (CGIFGYCNFL…DNDIAHIYDG (320 aa)) enclose the Glutamine amidotransferase type-2 domain. Residues 266–280 (STTSTFNHGSSTETP) are compositionally biased toward polar residues. Positions 266–285 (STTSTFNHGSSTETPAENGL) are disordered. SIS domains lie at 387 to 526 (WLTE…DLVS) and 559 to 704 (CDKK…VDLP).

The enzyme catalyses D-fructose 6-phosphate + L-glutamine = D-glucosamine 6-phosphate + L-glutamate. It participates in nucleotide-sugar biosynthesis; UDP-N-acetyl-alpha-D-glucosamine biosynthesis; alpha-D-glucosamine 6-phosphate from D-fructose 6-phosphate: step 1/1. Its function is as follows. Involved in amino sugar synthesis (formation of chitin, supplies the amino sugars of asparagine-linked oligosaccharides of glycoproteins). The chain is Putative glutamine--fructose-6-phosphate aminotransferase [isomerizing] from Saccharomyces cerevisiae (strain YJM789) (Baker's yeast).